The chain runs to 305 residues: tRNA dimethylallyltransferase (305 aa).

8 to 15 (GPTAVGKT) lines the ATP pocket. 10–15 (TAVGKT) contributes to the substrate binding site. Residues 33–36 (DSRQ) form an interaction with substrate tRNA region.

It belongs to the IPP transferase family. As to quaternary structure, monomer. The cofactor is Mg(2+).

The catalysed reaction is adenosine(37) in tRNA + dimethylallyl diphosphate = N(6)-dimethylallyladenosine(37) in tRNA + diphosphate. Its function is as follows. Catalyzes the transfer of a dimethylallyl group onto the adenine at position 37 in tRNAs that read codons beginning with uridine, leading to the formation of N6-(dimethylallyl)adenosine (i(6)A). The polypeptide is tRNA dimethylallyltransferase (Thermotoga sp. (strain RQ2)).